The sequence spans 273 residues: Undecaprenyl-diphosphatase (273 aa).

The next 7 membrane-spanning stretches (helical) occupy residues 6 to 26 (SLLIAAILGVVEGLTEFLPVS), 45 to 65 (AKTFEVVIQLGSILAVVVMFW), 90 to 110 (LTLIHILLGMIPAMVLGLVFH), 116 to 136 (LFNPINVMYALVVGGLLLIAA), 190 to 210 (YAASEFSFLLAVPMMMGATVL), 222 to 242 (ADIPMFAVGFVTAFVVALIAI), and 252 to 272 (ISFIPFAIYRFVVAAAVYVVF).

This sequence belongs to the UppP family.

It localises to the cell inner membrane. The enzyme catalyses di-trans,octa-cis-undecaprenyl diphosphate + H2O = di-trans,octa-cis-undecaprenyl phosphate + phosphate + H(+). Functionally, catalyzes the dephosphorylation of undecaprenyl diphosphate (UPP). Confers resistance to bacitracin. The sequence is that of Undecaprenyl-diphosphatase from Salmonella arizonae (strain ATCC BAA-731 / CDC346-86 / RSK2980).